Consider the following 87-residue polypeptide: UPF0213 protein SYNAS_10430 (87 aa).

Residues 2 to 78 (SKNYVYILEC…KKMSRAEKLQ (77 aa)) enclose the GIY-YIG domain.

It belongs to the UPF0213 family.

The protein is UPF0213 protein SYNAS_10430 of Syntrophus aciditrophicus (strain SB).